Consider the following 428-residue polypeptide: 5-methylthioadenosine/S-adenosylhomocysteine deaminase (428 aa).

Residues His-65 and His-67 each contribute to the Zn(2+) site. The substrate site is built by Glu-94, Arg-158, and His-184. Zn(2+) is bound at residue His-211. Positions 214 and 299 each coordinate substrate. Position 299 (Asp-299) interacts with Zn(2+).

Belongs to the metallo-dependent hydrolases superfamily. MTA/SAH deaminase family. The cofactor is Zn(2+).

The catalysed reaction is S-adenosyl-L-homocysteine + H2O + H(+) = S-inosyl-L-homocysteine + NH4(+). It catalyses the reaction S-methyl-5'-thioadenosine + H2O + H(+) = S-methyl-5'-thioinosine + NH4(+). In terms of biological role, catalyzes the deamination of 5-methylthioadenosine and S-adenosyl-L-homocysteine into 5-methylthioinosine and S-inosyl-L-homocysteine, respectively. Is also able to deaminate adenosine. This chain is 5-methylthioadenosine/S-adenosylhomocysteine deaminase, found in Moorella thermoacetica (strain ATCC 39073 / JCM 9320).